Here is a 79-residue protein sequence, read N- to C-terminus: Small ribosomal subunit protein bS18 (79 aa).

Belongs to the bacterial ribosomal protein bS18 family. Part of the 30S ribosomal subunit. Forms a tight heterodimer with protein bS6.

Its function is as follows. Binds as a heterodimer with protein bS6 to the central domain of the 16S rRNA, where it helps stabilize the platform of the 30S subunit. The protein is Small ribosomal subunit protein bS18 of Bacillus velezensis (strain DSM 23117 / BGSC 10A6 / LMG 26770 / FZB42) (Bacillus amyloliquefaciens subsp. plantarum).